The primary structure comprises 293 residues: Extracellular metalloprotease MGYG_00389 (293 aa).

The N-terminal stretch at 1-19 (MRFSVFLPAIAALSSAVAA) is a signal peptide. Asparagine 49 and asparagine 53 each carry an N-linked (GlcNAc...) asparagine glycan. Histidine 184 is a binding site for Zn(2+). Glutamate 185 is a catalytic residue. Histidine 188 lines the Zn(2+) pocket. Cysteine 223 and cysteine 249 are disulfide-bonded. The segment at 270 to 293 (GSGSGSVTRPRPKPPVLMDYEHRL) is disordered.

It belongs to the peptidase M43B family.

It localises to the secreted. Secreted metalloproteinase that allows assimilation of proteinaceous substrates. Plays a pivotal role as a pathogenicity determinant during infections and contributes to the ability of the pathogen to persist within the mammalian host. In Arthroderma gypseum (strain ATCC MYA-4604 / CBS 118893) (Microsporum gypseum), this protein is Extracellular metalloprotease MGYG_00389.